The sequence spans 175 residues: DELTA-stichotoxin-Hcr4a (175 aa).

Residues 1–10 (ALAGAIIAGA) are plays an important role in the hemolytic activity. The interval 9–28 (GASLTFQILDKVLAELGQVS) is N-terminal region. The phosphocholine site is built by S52, V85, S103, P105, Y131, Y135, and Y136. Residues 103-118 (SVPFDYNLYSNWWDVK) form a trp-rich region, which is important for the binding to lipid membrane region.

This sequence belongs to the actinoporin family. Sea anemone subfamily. In terms of assembly, octamer or nonamer in membranes. Monomer in the soluble state.

It is found in the secreted. The protein resides in the nematocyst. It localises to the target cell membrane. Its function is as follows. Pore-forming protein that forms cations-selective hydrophilic pores of around 1 nm and causes cardiac stimulation and cytolysis. Pore formation is a multi-step process that involves specific recognition of membrane sphingomyelin (but neither cholesterol nor phosphatidylcholine) using aromatic rich region and adjacent phosphocholine (POC) binding site, firm binding to the membrane (mainly driven by hydrophobic interactions) accompanied by the transfer of the N-terminal region to the lipid-water interface and finally pore formation after oligomerization of monomers. This is DELTA-stichotoxin-Hcr4a from Radianthus crispa (Leathery sea anemone).